Reading from the N-terminus, the 371-residue chain is Spermidine/putrescine import ATP-binding protein PotA (371 aa).

An ABC transporter domain is found at Val10–Ile240. Gly42 to Thr49 contacts ATP.

This sequence belongs to the ABC transporter superfamily. Spermidine/putrescine importer (TC 3.A.1.11.1) family. As to quaternary structure, the complex is composed of two ATP-binding proteins (PotA), two transmembrane proteins (PotB and PotC) and a solute-binding protein (PotD).

The protein resides in the cell inner membrane. It carries out the reaction ATP + H2O + polyamine-[polyamine-binding protein]Side 1 = ADP + phosphate + polyamineSide 2 + [polyamine-binding protein]Side 1.. Its function is as follows. Part of the ABC transporter complex PotABCD involved in spermidine/putrescine import. Responsible for energy coupling to the transport system. This is Spermidine/putrescine import ATP-binding protein PotA from Haemophilus ducreyi (strain 35000HP / ATCC 700724).